Consider the following 55-residue polypeptide: ATP synthase protein 8 (55 aa).

A helical transmembrane segment spans residues 11-31; that stretch reads LIMFSVTLMLLIVLVINHFML.

It belongs to the ATPase protein 8 family. As to quaternary structure, F-type ATPases have 2 components, CF(1) - the catalytic core - and CF(0) - the membrane proton channel.

The protein localises to the mitochondrion membrane. Mitochondrial membrane ATP synthase (F(1)F(0) ATP synthase or Complex V) produces ATP from ADP in the presence of a proton gradient across the membrane which is generated by electron transport complexes of the respiratory chain. F-type ATPases consist of two structural domains, F(1) - containing the extramembraneous catalytic core and F(0) - containing the membrane proton channel, linked together by a central stalk and a peripheral stalk. During catalysis, ATP synthesis in the catalytic domain of F(1) is coupled via a rotary mechanism of the central stalk subunits to proton translocation. Part of the complex F(0) domain. Minor subunit located with subunit a in the membrane. The chain is ATP synthase protein 8 (MT-ATP8) from Albinaria caerulea (Land snail).